We begin with the raw amino-acid sequence, 290 residues long: 4-hydroxy-tetrahydrodipicolinate synthase (290 aa).

Residue Ser44 coordinates pyruvate. The Proton donor/acceptor role is filled by Tyr132. The active-site Schiff-base intermediate with substrate is Lys161. Val202 provides a ligand contact to pyruvate.

It belongs to the DapA family. In terms of assembly, homotetramer; dimer of dimers.

It localises to the cytoplasm. The enzyme catalyses L-aspartate 4-semialdehyde + pyruvate = (2S,4S)-4-hydroxy-2,3,4,5-tetrahydrodipicolinate + H2O + H(+). It functions in the pathway amino-acid biosynthesis; L-lysine biosynthesis via DAP pathway; (S)-tetrahydrodipicolinate from L-aspartate: step 3/4. Functionally, catalyzes the condensation of (S)-aspartate-beta-semialdehyde [(S)-ASA] and pyruvate to 4-hydroxy-tetrahydrodipicolinate (HTPA). The chain is 4-hydroxy-tetrahydrodipicolinate synthase from Hydrogenobaculum sp. (strain Y04AAS1).